A 177-amino-acid polypeptide reads, in one-letter code: Large ribosomal subunit protein uL6 (177 aa).

This sequence belongs to the universal ribosomal protein uL6 family. In terms of assembly, part of the 50S ribosomal subunit.

Its function is as follows. This protein binds to the 23S rRNA, and is important in its secondary structure. It is located near the subunit interface in the base of the L7/L12 stalk, and near the tRNA binding site of the peptidyltransferase center. In Methanosarcina barkeri (strain Fusaro / DSM 804), this protein is Large ribosomal subunit protein uL6.